The primary structure comprises 342 residues: MFSSLYPLARASLFKMDAEDAHHLTLRMLGAAGRTGLACALSPRVPDAPRTVMGLSFRNPVGLAAGLDKDGAAIDGFAALGFGFIEVGTVTPRAQPGNPRPRMFRLPEADAIINRMGFNNSGVDQFVKNVQAARYRGVLGLNIGKNADTPIERAADDYLYCLERVYPFASYVTINISSPNTKNLRQLQGAGELDALLAALKDKQRRLADLHGKLVPLALKIAPDLDDEQVKEIAATLLRHDIEGVIATNTTLSREAVKGLPHADEAGGLSGRPVFDASNAVIRKLRAELGDAVPIIGVGGIFSGEDARAKLAAGAALVQLYTGFIYRGPALVAECVKAIARG.

Residues 65 to 69 (AGLDK) and T89 each bind FMN. Residue K69 participates in substrate binding. 114–118 (NRMGF) serves as a coordination point for substrate. Residues N142 and N175 each contribute to the FMN site. Substrate is bound at residue N175. S178 (nucleophile) is an active-site residue. Substrate is bound at residue N180. FMN-binding residues include K220 and T248. 249 to 250 (NT) lines the substrate pocket. FMN-binding positions include G271, G300, and 321-322 (YT).

It belongs to the dihydroorotate dehydrogenase family. Type 2 subfamily. Monomer. FMN is required as a cofactor.

Its subcellular location is the cell membrane. The enzyme catalyses (S)-dihydroorotate + a quinone = orotate + a quinol. It participates in pyrimidine metabolism; UMP biosynthesis via de novo pathway; orotate from (S)-dihydroorotate (quinone route): step 1/1. In terms of biological role, catalyzes the conversion of dihydroorotate to orotate with quinone as electron acceptor. The polypeptide is Dihydroorotate dehydrogenase (quinone) (Burkholderia pseudomallei (strain K96243)).